We begin with the raw amino-acid sequence, 319 residues long: Protoheme IX farnesyltransferase (319 aa).

The next 8 membrane-spanning stretches (helical) occupy residues 59-79, 108-128, 131-151, 158-178, 183-203, 232-252, 254-274, and 299-319; these read IGLI…AGAF, EALV…WFGA, LSAW…TIIL, NIVW…AAVT, WPAI…YWPL, VVLY…AGGA, WVYT…SHAL, and LTLL…VIGG.

The protein belongs to the UbiA prenyltransferase family. Protoheme IX farnesyltransferase subfamily.

Its subcellular location is the cell membrane. It carries out the reaction heme b + (2E,6E)-farnesyl diphosphate + H2O = Fe(II)-heme o + diphosphate. Its pathway is porphyrin-containing compound metabolism; heme O biosynthesis; heme O from protoheme: step 1/1. Functionally, converts heme B (protoheme IX) to heme O by substitution of the vinyl group on carbon 2 of heme B porphyrin ring with a hydroxyethyl farnesyl side group. In Pseudarthrobacter chlorophenolicus (strain ATCC 700700 / DSM 12829 / CIP 107037 / JCM 12360 / KCTC 9906 / NCIMB 13794 / A6) (Arthrobacter chlorophenolicus), this protein is Protoheme IX farnesyltransferase.